The primary structure comprises 61 residues: MQPRTQPLAQTLPFFLGGAPRDTGLRVPVIKMGTGWEGFQRTLKEVAYILLCCWCIKELLD.

As to expression, restricted to lens epithelial cells.

In terms of biological role, may play a role in lens epithelial cell differentiation. The polypeptide is Lens epithelial cell protein LEP503 (LENEP) (Homo sapiens (Human)).